The sequence spans 802 residues: Leucine--tRNA ligase (802 aa).

Residues 39–50 carry the 'HIGH' region motif; sequence PYPSGAGLHVGH. Positions 574 to 578 match the 'KMSKS' region motif; sequence KMSKS. K577 lines the ATP pocket.

This sequence belongs to the class-I aminoacyl-tRNA synthetase family.

The protein resides in the cytoplasm. The enzyme catalyses tRNA(Leu) + L-leucine + ATP = L-leucyl-tRNA(Leu) + AMP + diphosphate. This Macrococcus caseolyticus (strain JCSC5402) (Macrococcoides caseolyticum) protein is Leucine--tRNA ligase.